The sequence spans 128 residues: Probable soluble cytochrome b562 2 (128 aa).

The signal sequence occupies residues 1 to 22; that stretch reads MGKTLMALITAALLSTSSLVMA. Met29 and His124 together coordinate heme b.

The protein belongs to the cytochrome b562 family. Heme b is required as a cofactor.

The protein resides in the periplasm. Electron-transport protein of unknown function. This chain is Probable soluble cytochrome b562 2 (cybC2), found in Yersinia pestis.